The sequence spans 350 residues: Bifunctional methylenetetrahydrofolate dehydrogenase/cyclohydrolase, mitochondrial (350 aa).

The transit peptide at 1–35 (MASVSLLSALAVRLLRPTHGCHPRLQPFHLAAVRN) directs the protein to the mitochondrion. K50 carries the N6-acetyllysine; alternate modification. Residue K50 forms a Glycyl lysine isopeptide (Lys-Gly) (interchain with G-Cter in SUMO2); alternate linkage. Residues 84-88 (YVLNK) and 131-133 (VQL) contribute to the substrate site. Residues 200-202 (GRS) and R233 each bind NAD(+). Position 309–313 (309–313 (PGGVG)) interacts with substrate.

Belongs to the tetrahydrofolate dehydrogenase/cyclohydrolase family. Homodimer. Requires Mg(2+) as cofactor.

The protein localises to the mitochondrion. It catalyses the reaction (6R)-5,10-methylene-5,6,7,8-tetrahydrofolate + NAD(+) = (6R)-5,10-methenyltetrahydrofolate + NADH. It carries out the reaction (6R)-5,10-methenyltetrahydrofolate + H2O = (6R)-10-formyltetrahydrofolate + H(+). Its function is as follows. Although its dehydrogenase activity is NAD-specific, it can also utilize NADP at a reduced efficiency. The polypeptide is Bifunctional methylenetetrahydrofolate dehydrogenase/cyclohydrolase, mitochondrial (Mthfd2) (Mus musculus (Mouse)).